Here is a 181-residue protein sequence, read N- to C-terminus: Large ribosomal subunit protein uL10 (181 aa).

It belongs to the universal ribosomal protein uL10 family. Part of the ribosomal stalk of the 50S ribosomal subunit. The N-terminus interacts with L11 and the large rRNA to form the base of the stalk. The C-terminus forms an elongated spine to which L12 dimers bind in a sequential fashion forming a multimeric L10(L12)X complex.

Forms part of the ribosomal stalk, playing a central role in the interaction of the ribosome with GTP-bound translation factors. This chain is Large ribosomal subunit protein uL10, found in Chloroflexus aggregans (strain MD-66 / DSM 9485).